The primary structure comprises 347 residues: NADH-quinone oxidoreductase subunit H 1 (347 aa).

Helical transmembrane passes span 13–33 (IIMIGQSLLLLVCLLVFIAYV), 50–70 (PNVVGPFGLFQSFADLLKFVF), 82–102 (AVFLLAPLVTVLLALSTWAVV), 115–135 (VGILYIFAISSLEVYGIIMGG), 161–181 (IGFVIVTVLLCVGSLNLTDIV), 198–218 (FLDWHWLSLFPMFIVFFISAL), 263–283 (CALTTILFLGGWLPPVDIWIL), 286–306 (VPGIIWFTLKACLVFFMFAMV), and 321–341 (LGWKVFLPLSLAMVIIVAFVL).

This sequence belongs to the complex I subunit 1 family. NDH-1 is composed of 14 different subunits. Subunits NuoA, H, J, K, L, M, N constitute the membrane sector of the complex.

It is found in the cell inner membrane. It catalyses the reaction a quinone + NADH + 5 H(+)(in) = a quinol + NAD(+) + 4 H(+)(out). Functionally, NDH-1 shuttles electrons from NADH, via FMN and iron-sulfur (Fe-S) centers, to quinones in the respiratory chain. The immediate electron acceptor for the enzyme in this species is believed to be ubiquinone. Couples the redox reaction to proton translocation (for every two electrons transferred, four hydrogen ions are translocated across the cytoplasmic membrane), and thus conserves the redox energy in a proton gradient. This subunit may bind ubiquinone. The protein is NADH-quinone oxidoreductase subunit H 1 of Rhizobium etli (strain ATCC 51251 / DSM 11541 / JCM 21823 / NBRC 15573 / CFN 42).